A 202-amino-acid chain; its full sequence is MSLYPKAMDELIKNLSNLPTIGRKSARRLAYRIIDMDPKKVDELVESIVNVKTNIRPCANCGNLTDKKLCDICSDQKRDNSVITVVEDSMNVISIEKTGEYNGKYHVLGGLLSPRDNIAPQDLNLENLFLRCKKDYVKEVILALSPTTNGDLTTNFIIEVLKNEEYNVKVSRIAMGVPLGANLEYYDEMSLYKAILDRREIK.

The C4-type zinc-finger motif lies at 58–73 (CANCGNLTDKKLCDIC). The 98-residue stretch at 81 to 178 (SVITVVEDSM…KVSRIAMGVP (98 aa)) folds into the Toprim domain.

This sequence belongs to the RecR family.

Its function is as follows. May play a role in DNA repair. It seems to be involved in an RecBC-independent recombinational process of DNA repair. It may act with RecF and RecO. The polypeptide is Recombination protein RecR (Finegoldia magna (strain ATCC 29328 / DSM 20472 / WAL 2508) (Peptostreptococcus magnus)).